The chain runs to 132 residues: Nickel-responsive regulator (132 aa).

Residues His76, His87, His89, and Cys95 each coordinate Ni(2+).

Belongs to the transcriptional regulatory CopG/NikR family. In terms of assembly, homotetramer. The cofactor is Ni(2+).

Its function is as follows. Transcriptional repressor of the nikABCDE operon. Is active in the presence of excessive concentrations of intracellular nickel. The polypeptide is Nickel-responsive regulator (Klebsiella pneumoniae subsp. pneumoniae (strain ATCC 700721 / MGH 78578)).